The following is a 445-amino-acid chain: Protein PRRC1 (445 aa).

2 disordered regions span residues 1–71 (MMEE…PSAP) and 105–167 (PPVS…TGLL). Over residues 27–49 (MSSTPVPLAATSSFSSPNVSSME) the composition is skewed to polar residues. The span at 59–71 (PQPPLPPVRPSAP) shows a compositional bias: pro residues. 2 positions are modified to phosphoserine: serine 209 and serine 408.

This sequence belongs to the PRRC1 family. In terms of assembly, interacts with PRKAR1A; resulting in PKA activation. As to expression, ubiquitously expressed with higher expression in kidney, liver and placenta. Detected in embryonic kidney cells (HEK293 cells) (at protein level). In terms of tissue distribution, specifically expressed in liver.

The protein resides in the golgi apparatus. It is found in the cytoplasm. Its function is as follows. May act as a regulator of the protein kinase A (PKA) activity during embryonic development. This chain is Protein PRRC1 (PRRC1), found in Homo sapiens (Human).